We begin with the raw amino-acid sequence, 261 residues long: Cytochrome c oxidase subunit 3 (261 aa).

The Mitochondrial matrix portion of the chain corresponds to 1–15 (MTHQTHAYHMVNPSP). A helical transmembrane segment spans residues 16-34 (WPLTGALSALLMTSGLIMW). At 35–40 (FHFNST) the chain is on the mitochondrial intermembrane side. The helical transmembrane segment at 41–66 (TLLMLGLTTNMLTMYQWWRDVIREST) threads the bilayer. At 67 to 72 (FQGHHT) the chain is on the mitochondrial matrix side. The helical transmembrane segment at 73–105 (PNVQKGLRYGMILFIISEVLFFTGFFWAFYHSS) threads the bilayer. Residues 106–128 (LAPTPELGGCWPPTGIHPLNPLE) lie on the Mitochondrial intermembrane side of the membrane. The chain crosses the membrane as a helical span at residues 129 to 152 (VPLLNTSVLLASGVSITWAHHSLM). The Mitochondrial matrix segment spans residues 153-155 (EGN). The helical transmembrane segment at 156–183 (RNHMLQALFITIALGVYFTLLQASEYYE) threads the bilayer. Topologically, residues 184–190 (APFTISD) are mitochondrial intermembrane. Residues 191 to 223 (GVYGSTFFVATGFHGLHVIIGSTFLIVCFFRQL) form a helical membrane-spanning segment. Residues 224-232 (KFHFTSNHH) lie on the Mitochondrial matrix side of the membrane. A helical membrane pass occupies residues 233–256 (FGFEAAAWYWHFVDVVWLFLYVSI). The Mitochondrial intermembrane segment spans residues 257 to 261 (YWWGS).

The protein belongs to the cytochrome c oxidase subunit 3 family. Component of the cytochrome c oxidase (complex IV, CIV), a multisubunit enzyme composed of 14 subunits. The complex is composed of a catalytic core of 3 subunits MT-CO1, MT-CO2 and MT-CO3, encoded in the mitochondrial DNA, and 11 supernumerary subunits COX4I, COX5A, COX5B, COX6A, COX6B, COX6C, COX7A, COX7B, COX7C, COX8 and NDUFA4, which are encoded in the nuclear genome. The complex exists as a monomer or a dimer and forms supercomplexes (SCs) in the inner mitochondrial membrane with NADH-ubiquinone oxidoreductase (complex I, CI) and ubiquinol-cytochrome c oxidoreductase (cytochrome b-c1 complex, complex III, CIII), resulting in different assemblies (supercomplex SCI(1)III(2)IV(1) and megacomplex MCI(2)III(2)IV(2)).

It is found in the mitochondrion inner membrane. The catalysed reaction is 4 Fe(II)-[cytochrome c] + O2 + 8 H(+)(in) = 4 Fe(III)-[cytochrome c] + 2 H2O + 4 H(+)(out). Component of the cytochrome c oxidase, the last enzyme in the mitochondrial electron transport chain which drives oxidative phosphorylation. The respiratory chain contains 3 multisubunit complexes succinate dehydrogenase (complex II, CII), ubiquinol-cytochrome c oxidoreductase (cytochrome b-c1 complex, complex III, CIII) and cytochrome c oxidase (complex IV, CIV), that cooperate to transfer electrons derived from NADH and succinate to molecular oxygen, creating an electrochemical gradient over the inner membrane that drives transmembrane transport and the ATP synthase. Cytochrome c oxidase is the component of the respiratory chain that catalyzes the reduction of oxygen to water. Electrons originating from reduced cytochrome c in the intermembrane space (IMS) are transferred via the dinuclear copper A center (CU(A)) of subunit 2 and heme A of subunit 1 to the active site in subunit 1, a binuclear center (BNC) formed by heme A3 and copper B (CU(B)). The BNC reduces molecular oxygen to 2 water molecules using 4 electrons from cytochrome c in the IMS and 4 protons from the mitochondrial matrix. The sequence is that of Cytochrome c oxidase subunit 3 (MT-CO3) from Antilope cervicapra (Blackbuck).